The sequence spans 403 residues: Sorting nexin-32 (403 aa).

A PX domain is found at 20–168; that stretch reads LQGDSSLQVE…VFLEYGQDLS (149 aa). Residues 258–335 adopt a coiled-coil conformation; sequence NQLRTSFLKL…KARTRNREVR (78 aa).

The protein belongs to the sorting nexin family.

In terms of biological role, may be involved in several stages of intracellular trafficking. The protein is Sorting nexin-32 (SNX32) of Homo sapiens (Human).